We begin with the raw amino-acid sequence, 79 residues long: TALFLAMHYTSDIATAFSSVAHICRDVNYGWLIRNMHANGASFFFICIYLHIGRGLYYGSYLYKETWNVGVVLLLLTMM.

Helical transmembrane passes span 1–7, 31–52, and 67–79; these read TALFLAM, WLIRNMHANGASFFFICIYLHI, and WNVGVVLLLLTMM. Heme b is bound by residues histidine 37 and histidine 51.

This sequence belongs to the cytochrome b family. In terms of assembly, the cytochrome bc1 complex contains 3 respiratory subunits (MT-CYB, CYC1 and UQCRFS1), 2 core proteins (UQCRC1 and UQCRC2) and probably 6 low-molecular weight proteins. It depends on heme b as a cofactor.

Its subcellular location is the mitochondrion inner membrane. Component of the ubiquinol-cytochrome c reductase complex (complex III or cytochrome b-c1 complex) that is part of the mitochondrial respiratory chain. The b-c1 complex mediates electron transfer from ubiquinol to cytochrome c. Contributes to the generation of a proton gradient across the mitochondrial membrane that is then used for ATP synthesis. This chain is Cytochrome b (mt-cyb), found in Amphilophus citrinellus (Midas cichlid).